A 54-amino-acid polypeptide reads, in one-letter code: MPMIKSPHGEGGCVCAPPATDWTPPPLLPLLNRFDFRSTRPQTLLRRGGSNYGY.

This is Protein YmjE from Escherichia coli (strain K12).